Here is a 239-residue protein sequence, read N- to C-terminus: Exosome complex component Rrp41 (239 aa).

A disordered region spans residues 1-21 (MEERPERLISEDGLRLDGRKP).

This sequence belongs to the RNase PH family. Rrp41 subfamily. Component of the archaeal exosome complex. Forms a hexameric ring-like arrangement composed of 3 Rrp41-Rrp42 heterodimers. The hexameric ring associates with a trimer of Rrp4 and/or Csl4 subunits.

It localises to the cytoplasm. Functionally, catalytic component of the exosome, which is a complex involved in RNA degradation. Has 3'-&gt;5' exoribonuclease activity. Can also synthesize heteromeric RNA-tails. The protein is Exosome complex component Rrp41 of Methanopyrus kandleri (strain AV19 / DSM 6324 / JCM 9639 / NBRC 100938).